We begin with the raw amino-acid sequence, 214 residues long: Ribonuclease T (214 aa).

Residues 20–195 form the Exonuclease domain; that stretch reads VVVDVETAGF…YDTQKTAELF (176 aa). Positions 23, 25, 182, and 187 each coordinate Mg(2+). His-182 serves as the catalytic Proton donor/acceptor.

Belongs to the RNase T family. In terms of assembly, homodimer. It depends on Mg(2+) as a cofactor.

Functionally, trims short 3' overhangs of a variety of RNA species, leaving a one or two nucleotide 3' overhang. Responsible for the end-turnover of tRNA: specifically removes the terminal AMP residue from uncharged tRNA (tRNA-C-C-A). Also appears to be involved in tRNA biosynthesis. The polypeptide is Ribonuclease T (Vibrio parahaemolyticus serotype O3:K6 (strain RIMD 2210633)).